The following is a 1129-amino-acid chain: BLOC-2 complex member HPS5 (1129 aa).

Residues 483–503 (EFTSQQEEDLPDQCCGSHGNE) are disordered. A phosphoserine mark is found at S532 and S534. Residues 561-609 (HTSPDLKVRPELRGDEQSCEEDVSSDTCPKEEDTEEEKEVTSPPPEEDR) are disordered. Over residues 564-576 (PDLKVRPELRGDE) the composition is skewed to basic and acidic residues. The residue at position 695 (S695) is a Phosphoserine.

This sequence belongs to the HPS5 family. As to quaternary structure, component of the biogenesis of lysosome-related organelles complex-2 (or BLOC2) composed of HPS3, HPS5 and HPS6. Interacts with HPS6. Interacts with HPS3. May interact with all alpha-integrin chains that have an aromatic residue before the first lysine of the conserved KXGFFKR motif, including ITGA2, ITGA3, ITGA5 and ITGA6. Widely expressed. Isoform 1:Highly expressed in lungs and testis. Isoform 2:Highly expressed in placenta, kidney, testis ovary, lung and thymus.

It localises to the cytoplasm. Its subcellular location is the cytosol. Its function is as follows. May regulate the synthesis and function of lysosomes and of highly specialized organelles, such as melanosomes and platelet dense granules. Regulates intracellular vesicular trafficking in fibroblasts. May be involved in the regulation of general functions of integrins. The sequence is that of BLOC-2 complex member HPS5 (HPS5) from Homo sapiens (Human).